We begin with the raw amino-acid sequence, 234 residues long: Purine nucleoside phosphorylase DeoD-type (234 aa).

Histidine 4 lines the a purine D-ribonucleoside pocket. Phosphate contacts are provided by residues glycine 20, arginine 24, arginine 43, and 87 to 90 (RIGT). A purine D-ribonucleoside is bound by residues 179-181 (EME) and 203-204 (SD). The active-site Proton donor is aspartate 204.

Belongs to the PNP/UDP phosphorylase family. As to quaternary structure, homohexamer; trimer of homodimers.

It carries out the reaction a purine D-ribonucleoside + phosphate = a purine nucleobase + alpha-D-ribose 1-phosphate. The enzyme catalyses a purine 2'-deoxy-D-ribonucleoside + phosphate = a purine nucleobase + 2-deoxy-alpha-D-ribose 1-phosphate. Its function is as follows. Catalyzes the reversible phosphorolytic breakdown of the N-glycosidic bond in the beta-(deoxy)ribonucleoside molecules, with the formation of the corresponding free purine bases and pentose-1-phosphate. The chain is Purine nucleoside phosphorylase DeoD-type from Helicobacter pylori (strain Shi470).